Consider the following 382-residue polypeptide: MDLKTSNSPVIADPLPKLALPSAVMTYTTPTSFPSTGLYLNTPKKKPLPGKIEEVRAAGWLDLMLASSPPRKRQTKDFANDVQADELDLLYRNWVVNHPSALTSFEDIVNLARGKRLALFLDYDGTLSPIVDNPENAVMSDEMRSAVKHVASLFPTAIISGRSRDKVFDFVKLTELYYAGSHGMDIMGPVRKSDSSGQHVECIRSTDSEGKEVNLFQPASEFLPMISEVYKKLSESIKDIDGARMEDNKFCVSVHYRNVAPHDYGEVHQRVTAVLKNYPCLRLTHGRKVLEVRPVIDWNKGKAVEFLLESLGLCGKEDVLPIYVGDDKTDEDAFKVLKANSIGFGILVSSVPKDTDAFYSVRDPAEVMEFLKKLASWKEEST.

It belongs to the trehalose phosphatase family. A divalent metal cation is required as a cofactor. As to expression, expressed in roots and shoots.

The catalysed reaction is alpha,alpha-trehalose 6-phosphate + H2O = alpha,alpha-trehalose + phosphate. The protein operates within glycan biosynthesis; trehalose biosynthesis. Removes the phosphate from trehalose 6-phosphate to produce free trehalose. Trehalose accumulation in plant may improve abiotic stress tolerance. This Oryza sativa subsp. japonica (Rice) protein is Probable trehalose-phosphate phosphatase 2 (TPP2).